Reading from the N-terminus, the 28-residue chain is Gamma-conotoxin-like de7a (28 aa).

Intrachain disulfides connect Cys-2/Cys-18, Cys-9/Cys-22, and Cys-17/Cys-27. Pro-4 carries the post-translational modification 4-hydroxyproline. Glu-13 and Glu-16 each carry 4-carboxyglutamate. At Ser-28 the chain carries Serine amide.

The protein belongs to the conotoxin O1 superfamily. As to expression, expressed by the venom duct.

The protein resides in the secreted. In terms of biological role, gamma-conotoxins may act on voltage-gated non-specific cation pacemaker channels (HCN). The protein is Gamma-conotoxin-like de7a of Conasprella delessertii (Sozon's cone).